A 364-amino-acid chain; its full sequence is DNA replication and repair protein RecF (364 aa).

Residue 30-37 (GENGSGKT) coordinates ATP.

This sequence belongs to the RecF family.

The protein resides in the cytoplasm. Functionally, the RecF protein is involved in DNA metabolism; it is required for DNA replication and normal SOS inducibility. RecF binds preferentially to single-stranded, linear DNA. It also seems to bind ATP. This is DNA replication and repair protein RecF from Xylella fastidiosa (strain M23).